A 521-amino-acid chain; its full sequence is uncharacterized protein (521 aa).

This is an uncharacterized protein from Magallana gigas (Pacific oyster).